The chain runs to 185 residues: CASP-like protein 2C1 (185 aa).

At Met1 to Glu12 the chain is on the cytoplasmic side. A helical membrane pass occupies residues Gly13–Ser33. At Thr34–Gln52 the chain is on the extracellular side. Residues Ala53 to Leu73 form a helical membrane-spanning segment. At Lys74–Lys105 the chain is on the cytoplasmic side. Residues Ala106–Leu126 traverse the membrane as a helical segment. Topologically, residues Asp127 to Gln147 are extracellular. Residues Ile148–Ala168 form a helical membrane-spanning segment. Residues Ser169–His185 lie on the Cytoplasmic side of the membrane.

Belongs to the Casparian strip membrane proteins (CASP) family. In terms of assembly, homodimer and heterodimers.

It is found in the cell membrane. This chain is CASP-like protein 2C1, found in Sorghum bicolor (Sorghum).